The following is a 141-amino-acid chain: Actin-depolymerizing factor 9 (141 aa).

Ser-8 bears the Phosphoserine mark. Residues 8-141 (SGMWMTDDCK…GFDKIQDRAK (134 aa)) enclose the ADF-H domain.

The protein belongs to the actin-binding proteins ADF family.

The protein resides in the cytoplasm. It localises to the cytoskeleton. Functionally, does not display typical F-actin depolymerizing activity. Exhibits a high ability to stabilize and cross-link actin filaments. Functions as an actin bundling protein with the highest efficiency under acidic conditions. May play a role in the modulation of levels of histone H3 lysine 4 trimethylation and H3 lysine 9 and 14 acetylation at the FLC locus. This is Actin-depolymerizing factor 9 (ADF9) from Arabidopsis thaliana (Mouse-ear cress).